A 398-amino-acid chain; its full sequence is Acetate kinase (398 aa).

Asn7 is a binding site for Mg(2+). Position 14 (Lys14) interacts with ATP. Residue Arg91 participates in substrate binding. Residue Asp148 is the Proton donor/acceptor of the active site. Residues 208–212 (HLGNG), 283–285 (DFR), and 331–335 (GIGEH) contribute to the ATP site. Glu386 contributes to the Mg(2+) binding site.

It belongs to the acetokinase family. Homodimer. The cofactor is Mg(2+). It depends on Mn(2+) as a cofactor.

It localises to the cytoplasm. It catalyses the reaction acetate + ATP = acetyl phosphate + ADP. The protein operates within metabolic intermediate biosynthesis; acetyl-CoA biosynthesis; acetyl-CoA from acetate: step 1/2. Its function is as follows. Catalyzes the formation of acetyl phosphate from acetate and ATP. Can also catalyze the reverse reaction. The chain is Acetate kinase from Clostridium botulinum (strain Eklund 17B / Type B).